Reading from the N-terminus, the 145-residue chain is Cell wall teichoic acid glycosylation protein GtcA (145 aa).

The next 4 membrane-spanning stretches (helical) occupy residues 21–41 (IFMY…TFWL), 45–65 (ILNW…VLFA), 91–111 (FFGF…LLIS), and 122–142 (IWTN…IIFK).

This sequence belongs to the GtrA family.

The protein localises to the cell membrane. Functionally, involved in the decoration of cell wall teichoic acid with galactose and glucose. This Listeria monocytogenes protein is Cell wall teichoic acid glycosylation protein GtcA (gtcA).